We begin with the raw amino-acid sequence, 397 residues long: Aurora kinase A (397 aa).

The tract at residues 1–118 is disordered; sequence MDRCKENCVS…SIQKTEDSKK (118 aa). 2 stretches are compositionally biased toward polar residues: residues 29–55 and 84–102; these read QIPS…SQRV and RLSN…SGNN. Phosphoserine occurs at positions 40 and 50. The segment covering 103–118 has biased composition (basic and acidic residues); that stretch reads SEKEQTSIQKTEDSKK. Residues 126–376 enclose the Protein kinase domain; that stretch reads FDIGRPLGKG…LAEVLEHPWI (251 aa). ATP is bound by residues lysine 136, lysine 155, and 203 to 206; that span reads LEYA. The active-site Proton acceptor is aspartate 249. Lysine 251 is covalently cross-linked (Glycyl lysine isopeptide (Lys-Gly) (interchain with G-Cter in SUMO2)). ATP contacts are provided by residues 253–254 and aspartate 267; that span reads EN. The activation segment stretch occupies residues 273–286; it reads HAPSSRRTTLCGTL. Phosphothreonine is present on residues threonine 280 and threonine 281. Serine 335 is modified (phosphoserine; by PKA and PAK). Over residues 378–387 the composition is skewed to polar residues; that stretch reads ANSSKPPTGH. The tract at residues 378–397 is disordered; that stretch reads ANSSKPPTGHNSKEATSKSS. Residues 388–397 are compositionally biased toward basic and acidic residues; the sequence is NSKEATSKSS.

It belongs to the protein kinase superfamily. Ser/Thr protein kinase family. Aurora subfamily. In terms of assembly, part of a complex composed of NEDD9, AURKA and CTTN; within the complex NEDD9 acts as a scaffold protein and is required for complex formation. Identified in a complex with AUNIP and NIN. Interacts with CPEB1, JTB, TACC1, TPX2, PPP2CA, as well as with the protein phosphatase type 1 (PP1) isoforms PPP1CA, PPP1CB and PPP1CC. Also interacts with its substrates ARHGEF2, BORA, KIF2A, PARD3, and p53/TP53. Interaction with BORA promotes phosphorylation of PLK1. Interacts with FBXL7 and CIMAP3. Interacts with GADD45A, competing with its oligomerization. Interacts (via C-terminus) with AUNIP (via C-terminus). Interacts with SIRT2. Interacts with FRY; this interaction facilitates AURKA-mediated PLK1 phosphorylation. Interacts with MYCN; interaction is phospho-independent and triggers AURKA activation; AURKA competes with FBXW7 for binding to unphosphorylated MYCN but not for binding to phosphorylated MYCN. Interacts with HNRNPU. Interacts with AAAS. Interacts with KLHL18 and CUL3. Interacts with FOXP1. Interacts with HDAC6; AURKA-mediated phosphorylation of HDAC6 promotes deacetylation of alpha-tubulin. Activated by phosphorylation at Thr-281; this brings about a change in the conformation of the activation segment. Phosphorylation at Thr-281 varies during the cell cycle and is highest during M phase. Autophosphorylated at Thr-281 upon TPX2 binding. Thr-281 can be phosphorylated by several kinases, including PAK and PKA. Protein phosphatase type 1 (PP1) binds AURKA and inhibits its activity by dephosphorylating Thr-281 during mitosis. Phosphorylation at Ser-335 decreases the kinase activity. PPP2CA controls degradation by dephosphorylating Ser-52 at the end of mitosis. Phosphorylated in embryonic brain neurons. In terms of processing, ubiquitinated by CHFR, leading to its degradation by the proteasome. Ubiquitinated by the anaphase-promoting complex (APC), leading to its degradation by the proteasome. Ubiquitinated by the E3 ubiquitin-protein ligase complex SCF(FBXL7) during mitosis, leading to its degradation by the proteasome. Ubiquitinated by the CUL3-KLHL18 ligase leading to its activation at the centrosome which is required for initiating mitotic entry. Ubiquitination mediated by CUL3-KLHL18 ligase does not lead to its degradation by the proteasome. As to expression, detected in neurons in brain cortex and hippocampus (at protein level). Expressed in mammary gland and tumor.

The protein localises to the cytoplasm. The protein resides in the cytoskeleton. It localises to the microtubule organizing center. Its subcellular location is the centrosome. It is found in the spindle pole. The protein localises to the centriole. The protein resides in the cell projection. It localises to the neuron projection. Its subcellular location is the cilium. It is found in the cilium basal body. The protein localises to the basolateral cell membrane. It catalyses the reaction L-seryl-[protein] + ATP = O-phospho-L-seryl-[protein] + ADP + H(+). It carries out the reaction L-threonyl-[protein] + ATP = O-phospho-L-threonyl-[protein] + ADP + H(+). With respect to regulation, activation of CDK1, appears to be an upstream event of AURKA activation. Phosphatase inhibitor-2 (PPP1R2) and TPX2 act also as activators. Inactivated by the G2 checkpoint. Inhibited by GADD45A and p53/TP53, and through dephosphorylation by protein phosphatase type 1 (PP1). MLN8054 is also a potent and selective inhibitor. Activated during the early phase of cilia disassembly in the presence of FBXL7 and CIMAP3. Inhibited by the small molecule inhibitor VX-680. Functionally, mitotic serine/threonine kinase that contributes to the regulation of cell cycle progression. Associates with the centrosome and the spindle microtubules during mitosis and plays a critical role in various mitotic events including the establishment of mitotic spindle, centrosome duplication, centrosome separation as well as maturation, chromosomal alignment, spindle assembly checkpoint, and cytokinesis. Required for normal spindle positioning during mitosis and for the localization of NUMA1 and DCTN1 to the cell cortex during metaphase. Required for initial activation of CDK1 at centrosomes. Phosphorylates numerous target proteins, including ARHGEF2, BORA, BRCA1, CDC25B, DLGP5, HDAC6, KIF2A, LATS2, NDEL1, PARD3, PPP1R2, PLK1, RASSF1, TACC3, p53/TP53 and TPX2. Phosphorylates MCRS1 which is required for MCRS1-mediated kinetochore fiber assembly and mitotic progression. Regulates KIF2A tubulin depolymerase activity. Required for normal axon formation. Plays a role in microtubule remodeling during neurite extension. Important for microtubule formation and/or stabilization. Also acts as a key regulatory component of the p53/TP53 pathway, and particularly the checkpoint-response pathways critical for oncogenic transformation of cells, by phosphorylating and stabilizating p53/TP53. Phosphorylates its own inhibitors, the protein phosphatase type 1 (PP1) isoforms, to inhibit their activity. Inhibits cilia outgrowth. Required for cilia disassembly via phosphorylation of HDAC6 and subsequent deacetylation of alpha-tubulin. Regulates protein levels of the anti-apoptosis protein BIRC5 by suppressing the expression of the SCF(FBXL7) E3 ubiquitin-protein ligase substrate adapter FBXL7 through the phosphorylation of the transcription factor FOXP1. The polypeptide is Aurora kinase A (Rattus norvegicus (Rat)).